A 369-amino-acid polypeptide reads, in one-letter code: Maltose/maltodextrin import ATP-binding protein MalK (369 aa).

In terms of domain architecture, ABC transporter spans valine 4–isoleucine 234. Glycine 36–serine 43 contacts ATP.

This sequence belongs to the ABC transporter superfamily. Maltooligosaccharide importer (TC 3.A.1.1.1) family. As to quaternary structure, the complex is composed of two ATP-binding proteins (MalK), two transmembrane proteins (MalG and MalK) and a solute-binding protein (MalE).

It localises to the cell inner membrane. It carries out the reaction D-maltose(out) + ATP + H2O = D-maltose(in) + ADP + phosphate + H(+). In terms of biological role, part of the ABC transporter complex MalEFGK involved in maltose/maltodextrin import. Responsible for energy coupling to the transport system. This is Maltose/maltodextrin import ATP-binding protein MalK from Photorhabdus laumondii subsp. laumondii (strain DSM 15139 / CIP 105565 / TT01) (Photorhabdus luminescens subsp. laumondii).